A 444-amino-acid polypeptide reads, in one-letter code: C4-dicarboxylate transport protein (444 aa).

8 consecutive transmembrane segments (helical) span residues 19 to 39 (HLYF…HFYP), 55 to 75 (LVKM…IAGM), 90 to 110 (IYFL…SNIL), 161 to 181 (ILQV…VGDL), 199 to 219 (LVAI…AFTI), 230 to 250 (LAFL…VVLG), 343 to 363 (LLLV…AGFI), and 366 to 386 (AATL…ILGI).

The protein belongs to the dicarboxylate/amino acid:cation symporter (DAACS) (TC 2.A.23) family.

The protein localises to the cell inner membrane. Responsible for the transport of dicarboxylates such as succinate, fumarate, and malate from the periplasm across the membrane. The protein is C4-dicarboxylate transport protein of Allorhizobium ampelinum (strain ATCC BAA-846 / DSM 112012 / S4) (Agrobacterium vitis (strain S4)).